We begin with the raw amino-acid sequence, 373 residues long: Peptide chain release factor 1-like, mitochondrial (373 aa).

Residues 1–25 (MRSGFLSGARRLWARRAFSRTPPPS) constitute a mitochondrion transit peptide. A coiled-coil region spans residues 56 to 110 (QLAAAARLLSEKERELRDTESLLHDENEDLKKLAESEIALCQKQITELKHQIISL). The interval 229-293 (PKDLRIDTKR…LRARLYSMHL (65 aa)) is GGQ domain. Positions 243 to 245 (GGQ) match the GGQ motif. Q245 is modified (N5-methylglutamine).

Belongs to the prokaryotic/mitochondrial release factor family. Methylation of glutamine in the GGQ triplet by HEMK1 is conserved from bacteria to mammals.

It is found in the mitochondrion. Functionally, mitochondrial peptide chain release factor that directs the termination of translation in response to the peptide chain termination codons UAA and UAG. This chain is Peptide chain release factor 1-like, mitochondrial (Mtrf1l), found in Mus musculus (Mouse).